Reading from the N-terminus, the 119-residue chain is Ribonuclease P protein component (119 aa).

The protein belongs to the RnpA family. As to quaternary structure, consists of a catalytic RNA component (M1 or rnpB) and a protein subunit.

It catalyses the reaction Endonucleolytic cleavage of RNA, removing 5'-extranucleotides from tRNA precursor.. In terms of biological role, RNaseP catalyzes the removal of the 5'-leader sequence from pre-tRNA to produce the mature 5'-terminus. It can also cleave other RNA substrates such as 4.5S RNA. The protein component plays an auxiliary but essential role in vivo by binding to the 5'-leader sequence and broadening the substrate specificity of the ribozyme. This Aeromonas salmonicida (strain A449) protein is Ribonuclease P protein component.